Here is a 559-residue protein sequence, read N- to C-terminus: Hepatocyte nuclear factor 1-beta-A (559 aa).

The segment at 1-35 is dimerization; it reads MFANMVSKLTSLQQELLSALLDSGVTKDVLLQALE. Positions 5 to 36 constitute an HNF-p1 domain; that stretch reads MVSKLTSLQQELLSALLDSGVTKDVLLQALED. Positions 53–98 are disordered; it reads MSPSGSKLSDTDSKPVFHTLTNGHSKGKLSGDEGSEDGDDYDTPPI. The segment covering 85–94 has biased composition (acidic residues); it reads EGSEDGDDYD. The POU-specific atypical domain maps to 100–195; the sequence is KELQSQNTEE…ILRQFNQATQ (96 aa). The segment at residues 240–320 is a DNA-binding region (homeobox; HNF1-type); the sequence is LRRNRFKWGP…NRRKEEAFRQ (81 aa). 2 stretches are compositionally biased toward low complexity: residues 334 to 354 and 370 to 381; these read LNSL…SPPS and TSSTTINHHSSN. Positions 334–384 are disordered; sequence LNSLLSHSSPHHPQTSSSPPSKMQGVRYSQQGPGEVTSSTTINHHSSNAMS.

This sequence belongs to the HNF1 homeobox family. Binds DNA as a dimer. Can form homodimer or heterodimer with HNF1-alpha. In terms of tissue distribution, during embryonic development, expressed dynamically in the developing hindbrain, kidney (pronephros), gut, liver and pancreas; expressed in both intermediate mesoderm (precursor to the kidney) and the caudal hindbrain (including rhombomeres r5 and r6) at 10 hpf with expression diminishing caudally by 14 hpf. Strongly expressed in adult kidney, gut, liver and swim bladder; weakly expressed in brain, eye, testis, ovary and heart.

The protein resides in the nucleus. Its function is as follows. Transcription factor that binds to the inverted palindrome 5'-GTTAATNATTAAC-3'. Required for induction of rhombomere r5/r6 gene expression in the hindbrain. In Danio rerio (Zebrafish), this protein is Hepatocyte nuclear factor 1-beta-A (hnf1ba).